Here is a 426-residue protein sequence, read N- to C-terminus: Adenylosuccinate synthetase (426 aa).

Residues 12–18 (GDEGKGK) and 40–42 (GHT) each bind GTP. Asp-13 functions as the Proton acceptor in the catalytic mechanism. Asp-13 and Gly-40 together coordinate Mg(2+). Residues 13-16 (DEGK), 38-41 (NAGH), Thr-125, Arg-139, Gln-221, Thr-236, and Arg-300 each bind IMP. His-41 serves as the catalytic Proton donor. 296 to 302 (TTTGRPR) is a binding site for substrate. GTP is bound by residues Arg-302, 328–330 (KLD), and 410–412 (AVG).

This sequence belongs to the adenylosuccinate synthetase family. In terms of assembly, homodimer. Requires Mg(2+) as cofactor.

The protein resides in the cytoplasm. It carries out the reaction IMP + L-aspartate + GTP = N(6)-(1,2-dicarboxyethyl)-AMP + GDP + phosphate + 2 H(+). Its pathway is purine metabolism; AMP biosynthesis via de novo pathway; AMP from IMP: step 1/2. In terms of biological role, plays an important role in the de novo pathway of purine nucleotide biosynthesis. Catalyzes the first committed step in the biosynthesis of AMP from IMP. The protein is Adenylosuccinate synthetase of Syntrophomonas wolfei subsp. wolfei (strain DSM 2245B / Goettingen).